Here is a 962-residue protein sequence, read N- to C-terminus: Splicing regulator ARVCF (962 aa).

Positions Ser8–Gln46 form a coiled coil. A disordered region spans residues Thr95 to Thr122. Thr102 and Thr104 each carry phosphothreonine. The segment covering Thr102–Asp114 has biased composition (polar residues). Arg170 carries the post-translational modification Omega-N-methylarginine. Disordered regions lie at residues Gly186–Arg253 and Arg266–Pro290. The span at Arg206–Pro217 shows a compositional bias: low complexity. Ser267 is modified (phosphoserine). Residues Ala270–Pro280 are compositionally biased toward acidic residues. Phosphoserine is present on residues Ser332, Ser335, Ser343, and Ser345. ARM repeat units follow at residues Ser348–Phe387, Glu390–Tyr429, Thr433–Thr467, Leu468–Ser508, Leu526–Asn565, and Met575–Ala622. Residues Asp590 to Ala614 form a disordered region. The residue at position 606 (Ser606) is a Phosphoserine. Residues Gln607 to Lys623 carry the Nuclear localization signal motif. The residue at position 642 (Thr642) is a Phosphothreonine. ARM repeat units lie at residues Pro646–Ala686, Thr699–Leu738, Asp739–Asn781, and Thr782–Leu826. Residues Val776–Val962 are required for interaction with RNA-binding proteins DDX5, HNRNPH2 and SRSF1 and with mRNAs. The segment at Ala854–Val962 is disordered. A phosphoserine mark is found at Ser864 and Ser871. Thr872 carries the phosphothreonine modification. Positions Lys878–Ser887 are enriched in basic and acidic residues. Ser915 is subject to Phosphoserine. Positions Ala920–Arg932 are enriched in basic and acidic residues.

This sequence belongs to the beta-catenin family. As to quaternary structure, component of a ribonucleoprotein complex containing mRNAs and RNA-binding proteins including DDX5, HNRNPH2 and SRSF1 as well as ARVCF. Interacts (via the extreme C-terminus) with FRMPD2 (via the PDZ 2 domain). Interacts with CCDC85B. Found in all the examined tissues including heart, brain, liver and kidney. Found at low level in lung. Expressed in dermal connective tissue, salivary gland duct and in the corneal layer (at protein level). Expressed in arrector pili muscle (at protein level). High levels detected in epithelial cells with lower levels found in fibroblasts and T lymphocytes.

The protein localises to the cell junction. It localises to the adherens junction. Its subcellular location is the nucleus. It is found in the cytoplasm. Contributes to the regulation of alternative splicing of pre-mRNAs. This chain is Splicing regulator ARVCF, found in Homo sapiens (Human).